A 545-amino-acid chain; its full sequence is MKSLALALLVGGAIAAGPQQQVLQAPVDNPDVAEPPLQTIADTFDHLRGQATNLWNDVIDKVPNIMDTITHTPPPKKFNRRPDSEWNHIVRGAEIQAVWVEGDDGEKHRKVGGKLEAYDLRVKAVDPKALGVDTVRQYSGYLDDNENDKHLFYWFFESRNDPENDPVVLWLNGGPGCSSLTGLFLELGPSSITEDLKVNYNPYSWNANASVIFLDQPVNVGYSYSGGSVSDTNAAGKDVYALLTLFFEQFPEYAKQDFHIAGESYAGHYIPVFASEIMAHKERNINLKSILIGNGLTDPLTQYPLYRPMACGEGGYPAVLDQASCQSMDNALPRCLSMIEACYSSESAWTCVPASIYCNNAIIGPYQRTGRNPYDVRTDCEGGNLCYTQLGDISKYLNQAEVMKALGAEVSTYDSCNMDINRNFLFRGDWMKPFHRLVPGLIAEMPVLLYAGDADFICNWLGNKAWAEALEYPGHAKFAAAEMKNLTIVDNKSKGKVIGQVKSAGNFTFMRLYGGGHMVPLDQPEASLEFMNRWLKGEWSAKSSS.

The N-terminal stretch at 1–17 is a signal peptide; sequence MKSLALALLVGGAIAAG. Positions 18 to 123 are excised as a propeptide; it reads PQQQVLQAPV…KLEAYDLRVK (106 aa). Disulfide bonds link Cys-177/Cys-416, Cys-311/Cys-325, Cys-335/Cys-358, Cys-342/Cys-351, and Cys-380/Cys-386. The N-linked (GlcNAc...) asparagine glycan is linked to Asn-208. Residue Ser-264 is part of the active site. Asp-455 is a catalytic residue. 3 N-linked (GlcNAc...) asparagine glycosylation sites follow: Asn-485, Asn-491, and Asn-506. His-517 is an active-site residue.

It belongs to the peptidase S10 family.

The protein resides in the vacuole. The catalysed reaction is Release of a C-terminal amino acid with broad specificity.. In terms of biological role, vacuolar carboxypeptidase involved in degradation of small peptides. Digests preferentially peptides containing an aliphatic or hydrophobic residue in P1' position, as well as methionine, leucine or phenylalanine in P1 position of ester substrate. In Blastomyces gilchristii (strain SLH14081) (Blastomyces dermatitidis), this protein is Carboxypeptidase Y homolog A (CPYA).